The primary structure comprises 321 residues: UDP-N-acetylenolpyruvoylglucosamine reductase (321 aa).

The FAD-binding PCMH-type domain maps to Phe-36–Glu-203. Residue Arg-183 is part of the active site. Ser-232 functions as the Proton donor in the catalytic mechanism. Glu-302 is a catalytic residue.

Belongs to the MurB family. FAD serves as cofactor.

It is found in the cytoplasm. The enzyme catalyses UDP-N-acetyl-alpha-D-muramate + NADP(+) = UDP-N-acetyl-3-O-(1-carboxyvinyl)-alpha-D-glucosamine + NADPH + H(+). It participates in cell wall biogenesis; peptidoglycan biosynthesis. Its function is as follows. Cell wall formation. This Agrobacterium fabrum (strain C58 / ATCC 33970) (Agrobacterium tumefaciens (strain C58)) protein is UDP-N-acetylenolpyruvoylglucosamine reductase.